The chain runs to 283 residues: Apidaecins type 73 (283 aa).

An N-terminal signal peptide occupies residues 1–18 (KNFALAILVVTFVVAVFG). Propeptides lie at residues 19 to 41 (NTNL…EAEP), 62 to 69 (EAEPEAEP), 90 to 97 (EAELEAEP), 118 to 125 (EAEPEAEP), 146 to 153 (EAELEAEP), 174 to 181 (EAEPEAEP), 202 to 209 (EAEPEAEP), 230 to 237 (EAEPEAEP), and 258 to 265 (EAKPEAKP). The disordered stretch occupies residues 19 to 283 (NTNLDPPTRP…PQPRPPHPRI (265 aa)). A compositionally biased stretch (pro residues) spans 273-283 (IPQPRPPHPRI).

The protein belongs to the apidaecin family.

It localises to the secreted. Functionally, apidaecins have bactericidal activity; predominantly against Gram-negative bacteria. They seem to interfere with cell propagation. In Apis mellifera (Honeybee), this protein is Apidaecins type 73 (APID73).